Here is a 101-residue protein sequence, read N- to C-terminus: Small ribosomal subunit protein uS14 (101 aa).

Belongs to the universal ribosomal protein uS14 family. Part of the 30S ribosomal subunit. Contacts proteins S3 and S10.

Binds 16S rRNA, required for the assembly of 30S particles and may also be responsible for determining the conformation of the 16S rRNA at the A site. The protein is Small ribosomal subunit protein uS14 of Pseudomonas putida (strain GB-1).